The sequence spans 137 residues: Protein shisa-5 (137 aa).

A helical membrane pass occupies residues 3–23; that stretch reads FGATLAVGLTIFVLSVVTIII.

This sequence belongs to the shisa family. In terms of assembly, interacts with PDCD6; PDCD6 can stabilize SHISA5.

Its subcellular location is the endoplasmic reticulum membrane. It is found in the nucleus membrane. Its function is as follows. Can induce apoptosis in a caspase-dependent manner and plays a role in p53/TP53-dependent apoptosis. The polypeptide is Protein shisa-5 (SHISA5) (Pongo abelii (Sumatran orangutan)).